The primary structure comprises 350 residues: UDP-glucose 4-epimerase 2 (350 aa).

Residues G12–I14, D33–N37, D63–L64, F85, and K89 each bind NAD(+). S129–T131 contacts substrate. Y153 acts as the Proton acceptor in catalysis. NAD(+) is bound by residues K157 and Y181. Residues Y181–N183, N202–L204, T220–F222, R235, and R297–D300 each bind substrate.

Belongs to the NAD(P)-dependent epimerase/dehydratase family. As to quaternary structure, forms homodimers and heterodimers. The cofactor is NAD(+). In terms of tissue distribution, widely expressed. Most highly expressed in stems and flowers.

Its subcellular location is the cytoplasm. The enzyme catalyses UDP-alpha-D-glucose = UDP-alpha-D-galactose. It participates in carbohydrate metabolism; galactose metabolism. Its activity is regulated as follows. Enhanced activity by NaCl. Enhanced activity by NAD(+). Strongly inhibited by UDP. In terms of biological role, catalyzes the interconversion between UDP-glucose and UDP-galactose. Cooperates with UGE3 in pollen development and with UGE4 in cell wall carbohydrate biosynthesis and growth. The polypeptide is UDP-glucose 4-epimerase 2 (Arabidopsis thaliana (Mouse-ear cress)).